A 1028-amino-acid chain; its full sequence is Contactin-3 (1028 aa).

Positions 1 to 19 (MMFPWKQLILLSFIGCLGG) are cleaved as a signal peptide. Ig-like C2-type domains follow at residues 26–117 (PVFI…AKLQ), 122–208 (ENFK…ARVL), 227–313 (PKIE…GRLT), 318–402 (PHWV…AELK), 408–497 (PDFS…LVVT), and 499–593 (PTRI…ADLI). 5 cysteine pairs are disulfide-bonded: C50–C100, C144–C196, C249–C297, C339–C386, and C431–C479. N65 and N193 each carry an N-linked (GlcNAc...) asparagine glycan. 3 N-linked (GlcNAc...) asparagine glycosylation sites follow: N375, N468, and N489. An intrachain disulfide couples C521 to C577. Fibronectin type-III domains follow at residues 600–698 (PPEN…TEEA), 703–800 (PPSE…SAEE), 805–901 (APSQ…TKKT), and 902–998 (PPSQ…TSMD). The segment at 684 to 713 (GEPSLPSEKVRTEEAVPEVPPSEVNGGGGS) is disordered. N-linked (GlcNAc...) asparagine glycosylation is found at N765, N860, N895, N913, N931, and N956. S1002 carries GPI-anchor amidated serine lipidation. A propeptide spans 1003–1028 (TSAISNVHPMSSYMPIVLFLIVYVLW) (removed in mature form).

This sequence belongs to the immunoglobulin superfamily. Contactin family. Interacts with PTPRG. As to expression, in brain, it is expressed in frontal lobe, occipital lobe, cerebellum and amygdala.

The protein resides in the cell membrane. Functionally, contactins mediate cell surface interactions during nervous system development. Has some neurite outgrowth-promoting activity. This chain is Contactin-3 (CNTN3), found in Homo sapiens (Human).